A 157-amino-acid polypeptide reads, in one-letter code: MMKMEGIALKKRLSWISVCLLVLVSAAGMLFSTAAKTETSSHKAHTEAQVINTFDGVADYLQTYHKLPDNYITKSEAQALGWVASKGNLADVAPGKSIGGDIFSNREGKLPGKSGRTWREADINYTSGFRNSDRILYSSDWLIYKTTDHYQTFTKIR.

Positions 1 to 34 (MMKMEGIALKKRLSWISVCLLVLVSAAGMLFSTA) are cleaved as a signal peptide. Positions 35 to 47 (AKTETSSHKAHTE) are excised as a propeptide. The active-site Proton acceptor is glutamate 120. The Proton donor role is filled by histidine 149.

It belongs to the ribonuclease N1/T1 family.

The protein resides in the secreted. Hydrolyzes phosphodiester bonds in RNA, poly- and oligoribonucleotides resulting in 3'-nucleoside monophosphates via 2',3'-cyclophosphate intermediates. In Bacillus amyloliquefaciens (Bacillus velezensis), this protein is Ribonuclease.